A 473-amino-acid polypeptide reads, in one-letter code: Reticulon-4 receptor (473 aa).

The signal sequence occupies residues 1-26 (MKRASSGGSRLLAWVLWLQAWRVATP). 2 disulfides stabilise this stretch: C27–C33 and C31–C43. Residues 27-57 (CPGACVCYNEPKVTTSCPQQGLQAVPTGIPA) form the LRRNT domain. LRR repeat units lie at residues 58–79 (SSQR…SFQS), 82–103 (NLTI…AFTG), 106–128 (LLEQ…TFHG), 131–152 (HLHT…LFRG), 155–176 (ALQY…TFRD), 179–200 (NLTH…AFRG), 203–224 (SLDR…AFRD), and 227–248 (RLMT…VLMP). N-linked (GlcNAc...) asparagine glycosylation occurs at N82. Residue N179 is glycosylated (N-linked (GlcNAc...) asparagine). The LRRCT domain occupies 260 to 311 (NPWVCDCRARPLWAWLQKFRGSSSEVPCNLPQRLADRDLKRLAASDLEGCAV). Disulfide bonds link C264–C287, C266–C335, and C309–C336. The disordered stretch occupies residues 346–446 (VLEPGRPASA…GASGTGDAEG (101 aa)). Residue N372 is glycosylated (N-linked (GlcNAc...) asparagine). Over residues 413-429 (PRRRPGCSRKNRTRSHC) the composition is skewed to basic residues. Over residues 434–445 (AGSGASGTGDAE) the composition is skewed to gly residues. A lipid anchor (GPI-anchor amidated serine) is attached at S447. Positions 448-473 (GALPALACSLAPLGLALVLWTVLGPC) are cleaved as a propeptide — removed in mature form.

Belongs to the Nogo receptor family. In terms of assembly, homodimer. Interacts with MAG. Interacts with RTN4. Interacts with NGFR. Interacts with LINGO1. Interacts with KIAA0319L. Interacts with OLFM1; this inhibits interaction with LINGO1 and NGFR. Interacts with OMG. In terms of processing, N-glycosylated. O-glycosylated. Contains terminal sialic acid groups on its glycan chains. As to expression, detected in embryonic hippocampus neurons. Detected in brain (at protein level). Detected in neurons in the neocortex, in hippocampus, dorsal thalamus, cerebellum granule cell layer and the mitral cell layer in the olfactory bulb. Detected in brain, dorsal root ganglion and heart.

The protein resides in the cell membrane. The protein localises to the membrane raft. It is found in the cell projection. It localises to the dendrite. Its subcellular location is the axon. The protein resides in the perikaryon. Functionally, receptor for RTN4, OMG and MAG. Functions as a receptor for the sialylated gangliosides GT1b and GM1. Besides, functions as a receptor for chondroitin sulfate proteoglycans. Can also bind heparin. Intracellular signaling cascades are triggered via the coreceptor NGFR. Signaling mediates activation of Rho and downstream reorganization of the actin cytoskeleton. Mediates axonal growth inhibition. Mediates axonal growth inhibition and plays a role in regulating axon regeneration and neuronal plasticity in the adult central nervous system. Plays a role in postnatal brain development. Required for normal axon migration across the brain midline and normal formation of the corpus callosum. Protects motoneurons against apoptosis; protection against apoptosis is probably mediated via interaction with MAG. Acts in conjunction with RTN4 and LINGO1 in regulating neuronal precursor cell motility during cortical development. Like other family members, plays a role in restricting the number dendritic spines and the number of synapses that are formed during brain development. The protein is Reticulon-4 receptor (Rtn4r) of Mus musculus (Mouse).